A 1461-amino-acid chain; its full sequence is Selection and upkeep of intraepithelial T-cells protein 5 (1461 aa).

Positions methionine 1–serine 24 are cleaved as a signal peptide. Residues serine 25–lysine 1306 are Extracellular-facing. The region spanning glutamate 26–lysine 139 is the Ig-like V-type domain. 2 disulfides stabilise this stretch: cysteine 49–cysteine 123 and cysteine 163–cysteine 217. The Ig-like C1-type domain maps to alanine 142 to serine 231. N-linked (GlcNAc...) asparagine glycosylation occurs at asparagine 200. The chain crosses the membrane as a helical span at residues tyrosine 1307–leucine 1327. Residues lysine 1328–aspartate 1345 lie on the Cytoplasmic side of the membrane. A helical transmembrane segment spans residues threonine 1346–phenylalanine 1366. Topologically, residues arginine 1367–arginine 1387 are extracellular. The chain crosses the membrane as a helical span at residues phenylalanine 1388–isoleucine 1408. The Cytoplasmic portion of the chain corresponds to glutamine 1409–methionine 1427. Residues valine 1428–phenylalanine 1448 traverse the membrane as a helical segment. Residues aspartate 1449–glycine 1461 are Extracellular-facing.

The protein belongs to the SKINT family. In terms of tissue distribution, expressed in skin and, to a lower extent, testis.

The protein localises to the membrane. May act by engaging a cell surface molecule on immature T-cells in the embryonic thymus. The polypeptide is Selection and upkeep of intraepithelial T-cells protein 5 (Skint5) (Mus musculus (Mouse)).